Here is a 275-residue protein sequence, read N- to C-terminus: 2-dehydro-3-deoxyphosphooctonate aldolase (275 aa).

Belongs to the KdsA family.

It localises to the cytoplasm. The catalysed reaction is D-arabinose 5-phosphate + phosphoenolpyruvate + H2O = 3-deoxy-alpha-D-manno-2-octulosonate-8-phosphate + phosphate. It functions in the pathway carbohydrate biosynthesis; 3-deoxy-D-manno-octulosonate biosynthesis; 3-deoxy-D-manno-octulosonate from D-ribulose 5-phosphate: step 2/3. Its pathway is bacterial outer membrane biogenesis; lipopolysaccharide biosynthesis. This chain is 2-dehydro-3-deoxyphosphooctonate aldolase, found in Francisella tularensis subsp. holarctica (strain LVS).